Here is a 179-residue protein sequence, read N- to C-terminus: Probable splicing factor, arginine/serine-rich 6 (179 aa).

The RRM domain occupies 3–76 (AKVYVGGLPS…VRARVELSTG (74 aa)). Residues 75-179 (TGQRRGGGGR…RSRSRSASPH (105 aa)) form a disordered region. Gly residues predominate over residues 78 to 93 (RRGGGGRGGGFGGRGG). Basic and acidic residues predominate over residues 94–160 (GGRDRSPYRG…RSPQERDRSH (67 aa)). Basic residues predominate over residues 161-173 (SKSRSRSRSRSRS).

Belongs to the splicing factor SR family. Extensively phosphorylated on serine residues in the RS domain.

The protein resides in the nucleus. Functionally, plays a functionally redundant role in shifting germ cell sexual differentiation in hermaprodites. Required for the development of somatic gonad structures and for progression from larval stage to adulthood. This chain is Probable splicing factor, arginine/serine-rich 6 (rsp-6), found in Caenorhabditis elegans.